Reading from the N-terminus, the 640-residue chain is Serine/threonine-protein kinase WNG1 (640 aa).

The signal sequence occupies residues 1 to 70; the sequence is MPEQDLASGF…GVLCTVEAGA (70 aa). Disordered stretches follow at residues 100–222 and 237–280; these read PEVT…AQPT and SHPD…DASN. Residues 104–120 are compositionally biased toward polar residues; it reads HASSEGSPQFESSLSQQ. Basic and acidic residues predominate over residues 124–141; sequence RPADRGEAHNGEEPRKDA. Residues 175 to 186 are compositionally biased toward low complexity; sequence QRQASSAAESLA. The segment covering 248 to 279 has biased composition (basic and acidic residues); it reads FSKKQEGRRERRLAVRGDDSFARGHNRDRDAS. Residues 291–593 form the Protein kinase domain; that stretch reads WAKIAALATG…LKQVMEDPYF (303 aa). Lysine 395 is a binding site for ATP. Residue aspartate 486 is the Proton acceptor of the active site. The tract at residues 609-640 is disordered; it reads PFRGDFSIDDPDAGGKMYIPPSKEQDHEQENE. The segment covering 631–640 has biased composition (basic and acidic residues); that stretch reads KEQDHEQENE.

The protein belongs to the protein kinase superfamily. STE Ser/Thr protein kinase family. WNG subfamily. The cofactor is Mg(2+).

The protein localises to the cytoplasmic granule. It is found in the secreted. The protein resides in the parasitophorous vacuole lumen. The enzyme catalyses L-seryl-[protein] + ATP = O-phospho-L-seryl-[protein] + ADP + H(+). It carries out the reaction L-threonyl-[protein] + ATP = O-phospho-L-threonyl-[protein] + ADP + H(+). Functionally, serine/threonine-protein kinase which, at the tachyzoite stage, phosphorylates several parasitophorous vacuole (PV)-resident proteins such as GRA2, GRA6 and GRA7. By phosphorylating GRA2 and GRA6, regulates the formation of a functional intravacuolar network (IVN); IVN is composed of membranous tubules that bud from the PV membrane into the vacuolar lumen. Plays a role in the establishement of chronic infection in the host by controlling cyst formation in the host tissues. This Toxoplasma gondii protein is Serine/threonine-protein kinase WNG1.